The following is a 211-amino-acid chain: Protein-L-isoaspartate O-methyltransferase (211 aa).

Residue S62 is part of the active site.

The protein belongs to the methyltransferase superfamily. L-isoaspartyl/D-aspartyl protein methyltransferase family.

The protein localises to the cytoplasm. It catalyses the reaction [protein]-L-isoaspartate + S-adenosyl-L-methionine = [protein]-L-isoaspartate alpha-methyl ester + S-adenosyl-L-homocysteine. Catalyzes the methyl esterification of L-isoaspartyl residues in peptides and proteins that result from spontaneous decomposition of normal L-aspartyl and L-asparaginyl residues. It plays a role in the repair and/or degradation of damaged proteins. This is Protein-L-isoaspartate O-methyltransferase from Shewanella putrefaciens (strain CN-32 / ATCC BAA-453).